The primary structure comprises 372 residues: Type II methyltransferase M1.HphI (372 aa).

Residues 45–372 form the SAM-dependent MTase C5-type domain; it reads LTYIDLFSGA…EAVLKMNTNE (328 aa). The active site involves Cys-122.

This sequence belongs to the class I-like SAM-binding methyltransferase superfamily. C5-methyltransferase family.

It catalyses the reaction a 2'-deoxycytidine in DNA + S-adenosyl-L-methionine = a 5-methyl-2'-deoxycytidine in DNA + S-adenosyl-L-homocysteine + H(+). A methylase that recognizes the double-stranded sequence 5'-GGTGA-3' and protects the DNA from cleavage by the HphI endonuclease. Probably methylates C-2 on the bottom strand. This is Type II methyltransferase M1.HphI (hphIAM) from Haemophilus parahaemolyticus.